The sequence spans 266 residues: Large ribosomal subunit protein uL2m (266 aa).

This sequence belongs to the universal ribosomal protein uL2 family.

Its subcellular location is the mitochondrion. The chain is Large ribosomal subunit protein uL2m (mrpl2) from Dictyostelium citrinum (Slime mold).